A 408-amino-acid chain; its full sequence is MIERSNSTPSATPARPPLAVDEEYNQAFRSKSFLDLWSHAHHHLTHTFSSFKLSTSTPCAGRGGAREDDFLHAGGDGGAADDSEQSCSYTVLDDFVLEPSPESLARGARLQQRRRRRPRRHRVETLLIEYFDVTEEACEACSALLAAIGAARRHHLTLRRLLLRLDGGDDDDAKDALARHVRLDNPLSPGSLSEFHDVHARCSPLASRLAAAQRRLRRLARALRIARGTAAAALVGACAAAIVAAVVLAAHALVGIGVAAAAFGATPAGAARWWGRRAAEKVSSRHYARAGATLDAAARGAYIVGRDLDTVSRMVRRAHDELEHGRDVARIAMRGHGERPLLQEVAREEEECEEDLRAQLAELEEHVCLCLITINRTRRLVAHEMARGLPPPSPATVTTTSEERLTSS.

Transmembrane regions (helical) follow at residues 224–244 (RIAR…AIVA) and 252–272 (ALVG…GAAR). Residues 385–408 (MARGLPPPSPATVTTTSEERLTSS) form a disordered region.

This sequence belongs to the UPF0496 family.

It is found in the membrane. This is Putative UPF0496 protein 2 from Oryza sativa subsp. japonica (Rice).